A 278-amino-acid chain; its full sequence is Urease accessory protein UreD (278 aa).

The protein belongs to the UreD family. As to quaternary structure, ureD, UreF and UreG form a complex that acts as a GTP-hydrolysis-dependent molecular chaperone, activating the urease apoprotein by helping to assemble the nickel containing metallocenter of UreC. The UreE protein probably delivers the nickel.

The protein localises to the cytoplasm. Functionally, required for maturation of urease via the functional incorporation of the urease nickel metallocenter. This is Urease accessory protein UreD from Pseudomonas putida (strain ATCC 700007 / DSM 6899 / JCM 31910 / BCRC 17059 / LMG 24140 / F1).